The sequence spans 72 residues: Sec-independent protein translocase protein TatA (72 aa).

The helical transmembrane segment at 1–21 (MAGLSIWHVVIFAIVVILLFG) threads the bilayer. The tract at residues 47 to 72 (DEAASLNSPRTIDAQVKTSESTSVKS) is disordered. Polar residues predominate over residues 51–72 (SLNSPRTIDAQVKTSESTSVKS).

It belongs to the TatA/E family. The Tat system comprises two distinct complexes: a TatABC complex, containing multiple copies of TatA, TatB and TatC subunits, and a separate TatA complex, containing only TatA subunits. Substrates initially bind to the TatABC complex, which probably triggers association of the separate TatA complex to form the active translocon.

It localises to the cell inner membrane. Functionally, part of the twin-arginine translocation (Tat) system that transports large folded proteins containing a characteristic twin-arginine motif in their signal peptide across membranes. TatA could form the protein-conducting channel of the Tat system. The protein is Sec-independent protein translocase protein TatA of Acinetobacter baumannii (strain AB307-0294).